Reading from the N-terminus, the 152-residue chain is Protein-export protein SecB (152 aa).

The protein belongs to the SecB family. As to quaternary structure, homotetramer, a dimer of dimers. One homotetramer interacts with 1 SecA dimer.

Its subcellular location is the cytoplasm. Functionally, one of the proteins required for the normal export of preproteins out of the cell cytoplasm. It is a molecular chaperone that binds to a subset of precursor proteins, maintaining them in a translocation-competent state. It also specifically binds to its receptor SecA. This chain is Protein-export protein SecB, found in Rickettsia bellii (strain RML369-C).